Consider the following 558-residue polypeptide: 5-aminolevulinate synthase, mitochondrial (558 aa).

A mitochondrion-targeting transit peptide spans 1–25; it reads MERVVKLAAKHCPFVSKADPSALRR. The segment at 103 to 124 is disordered; sequence TTTPVTKKHQMPKHYASDLNGV. Positions 152, 265, and 284 each coordinate substrate. Pyridoxal 5'-phosphate is bound by residues serine 317, histidine 345, and threonine 374. Lysine 377 is an active-site residue. The residue at position 377 (lysine 377) is an N6-(pyridoxal phosphate)lysine. Residues threonine 406 and threonine 407 each contribute to the pyridoxal 5'-phosphate site. Threonine 492 is a binding site for substrate.

This sequence belongs to the class-II pyridoxal-phosphate-dependent aminotransferase family. As to quaternary structure, homodimer. The cofactor is pyridoxal 5'-phosphate.

Its subcellular location is the mitochondrion matrix. It carries out the reaction succinyl-CoA + glycine + H(+) = 5-aminolevulinate + CO2 + CoA. Its pathway is porphyrin-containing compound metabolism; protoporphyrin-IX biosynthesis; 5-aminolevulinate from glycine: step 1/1. Its function is as follows. Catalyzes the synthesis of 5-aminolevulinate (ALA) from succinyl-CoA and glycine, the first and rate-limiting step in heme biosynthesis. In Schizosaccharomyces pombe (strain 972 / ATCC 24843) (Fission yeast), this protein is 5-aminolevulinate synthase, mitochondrial.